We begin with the raw amino-acid sequence, 39 residues long: Decorsin (39 aa).

A high affinity binding domain region spans residues 27 to 38; the sequence is CRFPRGDADPYC. Positions 31–33 match the Cell attachment site motif; that stretch reads RGD.

The protein belongs to the ornatin family.

Its subcellular location is the secreted. In terms of biological role, inhibits fibrinogen interaction with platelet receptors expressed on glycoprotein IIb-IIIa complex. May prevent blood from clotting during either feeding and/or storage of ingested blood. In Macrobdella decora (North American leech), this protein is Decorsin.